A 700-amino-acid polypeptide reads, in one-letter code: DNA topoisomerase 1 (700 aa).

In terms of domain architecture, Toprim spans 3-114 (KNLIIVESPA…TLPRIVFHEI (112 aa)). Residues Glu9 and Asp83 each coordinate Mg(2+). In terms of domain architecture, Topo IA-type catalytic spans 130 to 553 (NMHSVNAQQT…EFYYPFMRKI (424 aa)). The segment at 164-169 (SAGRVQ) is interaction with DNA. The active-site O-(5'-phospho-DNA)-tyrosine intermediate is the Tyr298. C4-type zinc fingers lie at residues 573-599 (CPDCGGELAIRKGRFGEFVACLNFPKC), 629-656 (CPSCQKGEIVERFSKRGKFYGCSAYPKC), and 669-692 (CEECGETLVIKELKKGTFLECLKC).

The protein belongs to the type IA topoisomerase family. In terms of assembly, monomer. The cofactor is Mg(2+).

The catalysed reaction is ATP-independent breakage of single-stranded DNA, followed by passage and rejoining.. Functionally, releases the supercoiling and torsional tension of DNA, which is introduced during the DNA replication and transcription, by transiently cleaving and rejoining one strand of the DNA duplex. Introduces a single-strand break via transesterification at a target site in duplex DNA. The scissile phosphodiester is attacked by the catalytic tyrosine of the enzyme, resulting in the formation of a DNA-(5'-phosphotyrosyl)-enzyme intermediate and the expulsion of a 3'-OH DNA strand. The free DNA strand then undergoes passage around the unbroken strand, thus removing DNA supercoils. Finally, in the religation step, the DNA 3'-OH attacks the covalent intermediate to expel the active-site tyrosine and restore the DNA phosphodiester backbone. The sequence is that of DNA topoisomerase 1 from Campylobacter jejuni subsp. jejuni serotype O:2 (strain ATCC 700819 / NCTC 11168).